The chain runs to 112 residues: T cell receptor alpha variable 34 (112 aa).

An N-terminal signal peptide occupies residues 1-21 (METVLQVLLGILGFQAAWVSS). The Ig-like domain occupies 22–112 (QELEQSPQSL…HAGIYLCGAD (91 aa)). N-linked (GlcNAc...) asparagine glycans are attached at residues Asn-38 and Asn-42. Residues Cys-43 and Cys-109 are joined by a disulfide bond.

Alpha-beta TR is a heterodimer composed of an alpha and beta chain; disulfide-linked. The alpha-beta TR is associated with the transmembrane signaling CD3 coreceptor proteins to form the TR-CD3 (TcR or TCR). The assembly of alpha-beta TR heterodimers with CD3 occurs in the endoplasmic reticulum where a single alpha-beta TR heterodimer associates with one CD3D-CD3E heterodimer, one CD3G-CD3E heterodimer and one CD247 homodimer forming a stable octameric structure. CD3D-CD3E and CD3G-CD3E heterodimers preferentially associate with TR alpha and TR beta chains, respectively. The association of the CD247 homodimer is the last step of TcR assembly in the endoplasmic reticulum and is required for transport to the cell surface.

The protein localises to the cell membrane. Its function is as follows. V region of the variable domain of T cell receptor (TR) alpha chain that participates in the antigen recognition. Alpha-beta T cell receptors are antigen specific receptors which are essential to the immune response and are present on the cell surface of T lymphocytes. Recognize peptide-major histocompatibility (MH) (pMH) complexes that are displayed by antigen presenting cells (APC), a prerequisite for efficient T cell adaptive immunity against pathogens. Binding of alpha-beta TR to pMH complex initiates TR-CD3 clustering on the cell surface and intracellular activation of LCK that phosphorylates the ITAM motifs of CD3G, CD3D, CD3E and CD247 enabling the recruitment of ZAP70. In turn ZAP70 phosphorylates LAT, which recruits numerous signaling molecules to form the LAT signalosome. The LAT signalosome propagates signal branching to three major signaling pathways, the calcium, the mitogen-activated protein kinase (MAPK) kinase and the nuclear factor NF-kappa-B (NF-kB) pathways, leading to the mobilization of transcription factors that are critical for gene expression and essential for T cell growth and differentiation. The T cell repertoire is generated in the thymus, by V-(D)-J rearrangement. This repertoire is then shaped by intrathymic selection events to generate a peripheral T cell pool of self-MH restricted, non-autoaggressive T cells. Post-thymic interaction of alpha-beta TR with the pMH complexes shapes TR structural and functional avidity. The polypeptide is T cell receptor alpha variable 34 (Homo sapiens (Human)).